The primary structure comprises 293 residues: Ribosomal RNA small subunit methyltransferase H (293 aa).

S-adenosyl-L-methionine is bound by residues glycine 32 to histidine 34, aspartate 51, phenylalanine 78, aspartate 99, and glutamine 106. The tract at residues proline 271–isoleucine 293 is disordered.

The protein belongs to the methyltransferase superfamily. RsmH family.

Its subcellular location is the cytoplasm. The catalysed reaction is cytidine(1402) in 16S rRNA + S-adenosyl-L-methionine = N(4)-methylcytidine(1402) in 16S rRNA + S-adenosyl-L-homocysteine + H(+). Functionally, specifically methylates the N4 position of cytidine in position 1402 (C1402) of 16S rRNA. This is Ribosomal RNA small subunit methyltransferase H from Persephonella marina (strain DSM 14350 / EX-H1).